A 212-amino-acid chain; its full sequence is Cell division protein SepF (212 aa).

Positions 32-104 are disordered; it reads RYADPDTSYD…APLGSDAHRE (73 aa). The segment covering 64 to 73 has biased composition (acidic residues); it reads EAEEDGGDYG.

Belongs to the SepF family. In terms of assembly, homodimer. Interacts with FtsZ.

The protein resides in the cytoplasm. Its function is as follows. Cell division protein that is part of the divisome complex and is recruited early to the Z-ring. Probably stimulates Z-ring formation, perhaps through the cross-linking of FtsZ protofilaments. Its function overlaps with FtsA. The sequence is that of Cell division protein SepF from Saccharopolyspora erythraea (strain ATCC 11635 / DSM 40517 / JCM 4748 / NBRC 13426 / NCIMB 8594 / NRRL 2338).